The primary structure comprises 335 residues: Cathepsin B-like cysteine proteinase 4 (335 aa).

The first 15 residues, 1 to 15 (MKYLILAALVAVTAG), serve as a signal peptide directing secretion. The propeptide occupies 16 to 80 (LVIPLVPKTQ…VVKHDINEDT (65 aa)). 6 cysteine pairs are disulfide-bonded: C94/C123, C106/C150, C142/C209, C143/C146, C179/C213, and C187/C199. The active site involves C109. A glycan (N-linked (GlcNAc...) asparagine) is linked at N193. Active-site residues include H281 and N301.

The protein belongs to the peptidase C1 family.

The protein resides in the secreted. In terms of biological role, thiol protease which shows activity against the fluorogenic substrate z-Arg-Arg-AMC. The chain is Cathepsin B-like cysteine proteinase 4 (cpr-4) from Caenorhabditis elegans.